Reading from the N-terminus, the 208-residue chain is 3-demethoxyubiquinol 3-hydroxylase (208 aa).

Fe cation is bound by residues Glu-57, Glu-87, His-90, Glu-139, Glu-171, and His-174.

It belongs to the COQ7 family. Fe cation is required as a cofactor.

The protein resides in the cell membrane. The catalysed reaction is a 5-methoxy-2-methyl-3-(all-trans-polyprenyl)benzene-1,4-diol + AH2 + O2 = a 3-demethylubiquinol + A + H2O. It participates in cofactor biosynthesis; ubiquinone biosynthesis. Its function is as follows. Catalyzes the hydroxylation of 2-nonaprenyl-3-methyl-6-methoxy-1,4-benzoquinol during ubiquinone biosynthesis. The protein is 3-demethoxyubiquinol 3-hydroxylase of Herbaspirillum seropedicae.